Here is a 660-residue protein sequence, read N- to C-terminus: Cysteine--tRNA ligase, cytoplasmic (660 aa).

Residues 1 to 10 (MSENSSPKLE) show a composition bias toward polar residues. Residues 1-20 (MSENSSPKLESTSAAAASTK) are disordered. Cysteine 65 serves as a coordination point for Zn(2+). The 'HIGH' region motif lies at 67–77 (PTVYDASHMGH). Residues cysteine 256, histidine 281, and glutamate 285 each contribute to the Zn(2+) site. A 'KMSKS' region motif is present at residues 314-318 (KMSKS). ATP is bound at residue lysine 317. 2 disordered regions span residues 563–584 (IEKK…KFEK) and 627–660 (QKEY…QSPQ). A compositionally biased stretch (basic and acidic residues) spans 627-639 (QKEYDNQTKEHNN). The segment covering 643-660 (SLSTSTSSPTLTSTQSPQ) has biased composition (low complexity).

This sequence belongs to the class-I aminoacyl-tRNA synthetase family. Zn(2+) serves as cofactor.

It is found in the cytoplasm. The catalysed reaction is tRNA(Cys) + L-cysteine + ATP = L-cysteinyl-tRNA(Cys) + AMP + diphosphate. The sequence is that of Cysteine--tRNA ligase, cytoplasmic (cysS) from Dictyostelium discoideum (Social amoeba).